The sequence spans 3080 residues: Protein PIEZO homolog (3080 aa).

Transmembrane regions (helical) follow at residues 28 to 48 (YIYF…SLIL), 57 to 77 (PIIT…VNVV), 86 to 106 (LSVN…WIVF), 113 to 133 (VIVF…LVYP), 204 to 224 (YPSI…LLLA), and 232 to 252 (VMLK…LFVY). An N-linked (GlcNAc...) asparagine glycan is attached at N276. A helical transmembrane segment spans residues 285–305 (WPLVIGYITVLLLYISTCILF). N-linked (GlcNAc...) asparagine glycans are attached at residues N312 and N339. Helical transmembrane passes span 362–382 (ILVV…LASG) and 396–416 (VIYI…IFNI). N-linked (GlcNAc...) asparagine glycosylation is present at N434. The chain crosses the membrane as a helical span at residues 438–458 (WLYIGVQIVVSLTLSLYCFYS). Positions 469–548 (KKDQQSQQSQ…GGGIIRPRKP (80 aa)) are disordered. The span at 473-505 (QSQQSQPQPQQQQQQQQSSQNNQIQQSPLQYQQ) shows a compositional bias: low complexity. Over residues 512–532 (ISNKSLPSSPMSTKSTTVHIQ) the composition is skewed to polar residues. 3 N-linked (GlcNAc...) asparagine glycosylation sites follow: N514, N567, and N606. Transmembrane regions (helical) follow at residues 672–692 (GLTS…VFVI), 700–720 (FWMC…IWQL), and 740–760 (YGSP…FSII). N-linked (GlcNAc...) asparagine glycosylation is present at N795. The next 3 membrane-spanning stretches (helical) occupy residues 827 to 847 (FCYL…INIV), 849 to 869 (MATV…SIHI), and 872 to 892 (FWII…IMQF). An N-linked (GlcNAc...) asparagine glycan is attached at N918. The chain crosses the membrane as a helical span at residues 928–948 (LFGCSSILVVCVFQLTVFFSI). N992 carries an N-linked (GlcNAc...) asparagine glycan. Helical transmembrane passes span 1036-1056 (FAIS…MIVI) and 1067-1087 (IGSF…AALL). A glycan (N-linked (GlcNAc...) asparagine) is linked at N1109. The segment at 1158–1185 (QQQRKLEEHEEEYEEEEDQFGNKKNNDK) is disordered. The span at 1166–1176 (HEEEYEEEEDQ) shows a compositional bias: acidic residues. N-linked (GlcNAc...) asparagine glycosylation is found at N1191, N1240, and N1251. The segment at 1199 to 1253 (DDGNNNNNNNNNNNNNNNNNNNNNNNNNNNNNNNNNNNNNNNQSNNENNENNNNS) is disordered. Low complexity predominate over residues 1202–1252 (NNNNNNNNNNNNNNNNNNNNNNNNNNNNNNNNNNNNNNNQSNNENNENNNN). 3 helical membrane passes run 1281-1301 (VLAF…LIII), 1316-1336 (IYVS…ILVV), and 1360-1380 (LLLL…VLFF). 2 N-linked (GlcNAc...) asparagine glycosylation sites follow: N1424 and N1440. Helical transmembrane passes span 1472 to 1492 (VILI…SCFY) and 1519 to 1539 (IYNW…ILYF). N-linked (GlcNAc...) asparagine glycosylation is found at N1559 and N1589. The helical transmembrane segment at 1619-1639 (IETGPLSISTISDVIIMVLLA) threads the bilayer. Basic residues predominate over residues 1704-1714 (RINRRKNRHNH). The tract at residues 1704-1812 (RINRRKNRHN…NPLSNSSSTV (109 aa)) is disordered. Low complexity predominate over residues 1715-1742 (YYNNNPNNNYNNNNNNNNSNSSNSNNNN). N1731, N1734, N1763, N1768, N1771, N1779, N1807, and N1864 each carry an N-linked (GlcNAc...) asparagine glycan. Over residues 1762–1782 (KNTTNQNATNSTYSPFANSTM) the composition is skewed to polar residues. Positions 1789–1812 (NNNNNNNNNNNFNNNPLSNSSSTV) are enriched in low complexity. Disordered regions lie at residues 1873–1899 (LQQE…SSKE) and 1958–2032 (SQLL…TSSS). Low complexity predominate over residues 1958-2021 (SQLLQQQQQQ…NNNNNNNNNN (64 aa)). A glycan (N-linked (GlcNAc...) asparagine) is linked at N2027. A run of 2 helical transmembrane segments spans residues 2078 to 2098 (IANG…AVFL) and 2112 to 2132 (FWRF…VFQI). An N-linked (GlcNAc...) asparagine glycan is attached at N2148. A helical membrane pass occupies residues 2199–2219 (VFGLYIIDGHFISGAFWDLAI). Residues 2277–2367 (LNNSPISLNS…NNNNNNNNNN (91 aa)) form a disordered region. N2285 carries N-linked (GlcNAc...) asparagine glycosylation. Positions 2288 to 2367 (NNNNNNNNNN…NNNNNNNNNN (80 aa)) are enriched in low complexity. 2 helical membrane-spanning segments follow: residues 2427-2447 (IIIY…WLAI) and 2457-2477 (YYMP…IFPQ). An N-linked (GlcNAc...) asparagine glycan is attached at N2478. 4 helical membrane-spanning segments follow: residues 2500–2520 (YIVI…IYLY), 2530–2550 (QIVL…DLIV), 2553–2573 (FSFG…IYLY), and 2671–2691 (FVTG…PLII). Residues N2762, N2790, N2837, N2840, N2848, N2858, N2908, N2913, and N2935 are each glycosylated (N-linked (GlcNAc...) asparagine). Residues 2835 to 2863 (QSNNSNNSNNPNENSSSGSDDNNNNSNNN) are disordered. Low complexity predominate over residues 2836–2863 (SNNSNNSNNPNENSSSGSDDNNNNSNNN). The helical transmembrane segment at 2955–2975 (ITSTLVSAGIIGLYVSVVLSV) threads the bilayer. The tract at residues 3054 to 3080 (PTINSTLNNQNNQNNNNNNNNNHEKIN) is disordered. N3057 carries an N-linked (GlcNAc...) asparagine glycan. A compositionally biased stretch (low complexity) spans 3061–3074 (NNQNNQNNNNNNNN).

It belongs to the PIEZO (TC 1.A.75) family.

The protein localises to the membrane. This Dictyostelium discoideum (Social amoeba) protein is Protein PIEZO homolog.